The chain runs to 150 residues: 6,7-dimethyl-8-ribityllumazine synthase (150 aa).

5-amino-6-(D-ribitylamino)uracil-binding positions include F11, 43–45, and 67–69; these read TYE and AVI. 72 to 73 contacts (2S)-2-hydroxy-3-oxobutyl phosphate; it reads AT. H75 serves as the catalytic Proton donor. L100 is a binding site for 5-amino-6-(D-ribitylamino)uracil. R115 lines the (2S)-2-hydroxy-3-oxobutyl phosphate pocket.

It belongs to the DMRL synthase family.

It carries out the reaction (2S)-2-hydroxy-3-oxobutyl phosphate + 5-amino-6-(D-ribitylamino)uracil = 6,7-dimethyl-8-(1-D-ribityl)lumazine + phosphate + 2 H2O + H(+). It functions in the pathway cofactor biosynthesis; riboflavin biosynthesis; riboflavin from 2-hydroxy-3-oxobutyl phosphate and 5-amino-6-(D-ribitylamino)uracil: step 1/2. Functionally, catalyzes the formation of 6,7-dimethyl-8-ribityllumazine by condensation of 5-amino-6-(D-ribitylamino)uracil with 3,4-dihydroxy-2-butanone 4-phosphate. This is the penultimate step in the biosynthesis of riboflavin. This Staphylothermus marinus (strain ATCC 43588 / DSM 3639 / JCM 9404 / F1) protein is 6,7-dimethyl-8-ribityllumazine synthase.